Reading from the N-terminus, the 384-residue chain is FAD-dependent urate hydroxylase (384 aa).

FAD contacts are provided by residues Gly-11, 30-31, Ser-43, and Val-125; that span reads EA. Substrate-binding positions include Asn-178, Arg-204, and 216–218; that span reads YFF. Residues Asp-285 and 295-299 each bind FAD; that span reads GQGGC.

The protein belongs to the FAD-dependent urate hydroxylase family. The cofactor is FAD.

It catalyses the reaction urate + NADH + O2 + H(+) = 5-hydroxyisourate + NAD(+) + H2O. Its pathway is purine metabolism; urate degradation. Catalyzes the hydroxylation of uric acid to 5-hydroxyisourate. This chain is FAD-dependent urate hydroxylase (hpxO), found in Klebsiella pneumoniae.